Consider the following 234-residue polypeptide: MAKLTKRMRVIRDKVDVTKQYDINEAVALLKELATAKFVESVDVAVNLGIDARKSDQNVRGATVLPHGTGRSVRVAVFAQGANAEAAKEAGAELVGMDDLADQIKKGEMNFDVVIASPDAMRVVGQLGQILGPRGLMPNPKVGTVTPNVAEAVKNAKAGQVRYRNDKNGIIHTTIGKVDFDSDKLKENLESLVVALKKAKPATAKGIYIKKISLSTTMGAGVAIDQSGLTAVVN.

It belongs to the universal ribosomal protein uL1 family. As to quaternary structure, part of the 50S ribosomal subunit.

Functionally, binds directly to 23S rRNA. The L1 stalk is quite mobile in the ribosome, and is involved in E site tRNA release. Protein L1 is also a translational repressor protein, it controls the translation of the L11 operon by binding to its mRNA. The polypeptide is Large ribosomal subunit protein uL1 (Yersinia pseudotuberculosis serotype O:1b (strain IP 31758)).